Consider the following 1440-residue polypeptide: Actin cytoskeleton-regulatory complex protein PAN1 (1440 aa).

Residues M1–Y21 show a composition bias toward polar residues. The disordered stretch occupies residues M1 to Y67. Residues T39–Q63 show a composition bias toward low complexity. The region spanning D117–F206 is the EH 1 domain. Positions L150–A185 constitute an EF-hand 1 domain. Disordered stretches follow at residues E234–P285 and Q297–Q428. Polar residues-rich tracts occupy residues P245 to Q257 and Q297 to L384. Residues Q385–Q398 show a composition bias toward low complexity. A compositionally biased stretch (polar residues) spans P399–T423. The EH 2 domain occupies E480–H569. Residues L513 to R548 form the EF-hand 2 domain. Disordered regions lie at residues P564 to S629 and R861 to D1440. Polar residues predominate over residues S573 to G583. A coiled-coil region spans residues T627–S686. Residues E867–K876 are compositionally biased toward basic and acidic residues. Positions T882–T914 are enriched in low complexity. Residues P921–N984 are compositionally biased toward basic and acidic residues. The span at T985 to A994 shows a compositional bias: polar residues. Residues P1023–Y1032 are compositionally biased toward acidic residues. A coiled-coil region spans residues E1024–E1076. Residues Q1038–M1067 are compositionally biased toward basic and acidic residues. The segment covering N1068 to P1077 has biased composition (acidic residues). The segment covering S1080–E1100 has biased composition (polar residues). Over residues E1101–E1112 the composition is skewed to basic and acidic residues. The span at S1140–P1155 shows a compositional bias: low complexity. Residues D1180–D1192 are compositionally biased toward acidic residues. Residues T1218 to A1230 show a composition bias toward basic and acidic residues. Composition is skewed to pro residues over residues V1232 to I1255, D1311 to Q1324, A1333 to L1353, and P1362 to G1402. The WH2 domain maps to N1405 to V1422. Residues K1420–A1430 show a composition bias toward basic and acidic residues.

It belongs to the PAN1 family. As to quaternary structure, component of the PAN1 actin cytoskeleton-regulatory complex.

The protein localises to the cell membrane. The protein resides in the endosome membrane. It is found in the cytoplasm. Its subcellular location is the cytoskeleton. It localises to the actin patch. Component of the PAN1 actin cytoskeleton-regulatory complex required for the internalization of endosomes during actin-coupled endocytosis. The complex links the site of endocytosis to the cell membrane-associated actin cytoskeleton. Mediates uptake of external molecules and vacuolar degradation of plasma membrane proteins. Plays a role in the proper organization of the cell membrane-associated actin cytoskeleton and promotes its destabilization. In Meyerozyma guilliermondii (strain ATCC 6260 / CBS 566 / DSM 6381 / JCM 1539 / NBRC 10279 / NRRL Y-324) (Yeast), this protein is Actin cytoskeleton-regulatory complex protein PAN1 (PAN1).